A 72-amino-acid polypeptide reads, in one-letter code: Subtilisin-chymotrypsin inhibitor-2B (72 aa).

It belongs to the protease inhibitor I13 (potato type I serine protease inhibitor) family.

In terms of biological role, inhibits both subtilisin and chymotrypsin. This Hordeum vulgare (Barley) protein is Subtilisin-chymotrypsin inhibitor-2B.